The primary structure comprises 243 residues: 35 kDa gas vesicle protein (243 aa).

The protein belongs to the gas vesicle GvpC family.

It is found in the gas vesicle shell. Its function is as follows. May confer stability to the gas vesicle shells. Gas vesicles are small, hollow, gas filled protein structures that are found in several microbial planktonic microorganisms. They allow the positioning of the organism at the favorable depth for growth. This is 35 kDa gas vesicle protein from Dactylococcopsis salina (strain PCC 8305) (Myxobactron salinum).